The primary structure comprises 386 residues: 2-isopropylmalate synthase (386 aa).

Residues 12–265 (VRIFDTTLRD…EVNIKTYKLY (254 aa)) enclose the Pyruvate carboxyltransferase domain. A divalent metal cation-binding residues include Asp-21, His-203, His-205, and Asn-239.

The protein belongs to the alpha-IPM synthase/homocitrate synthase family. Homodimer. Requires a divalent metal cation as cofactor.

It carries out the reaction 3-methyl-2-oxobutanoate + acetyl-CoA + H2O = (2S)-2-isopropylmalate + CoA + H(+). The protein operates within amino-acid biosynthesis; L-leucine biosynthesis; L-leucine from 3-methyl-2-oxobutanoate: step 1/4. Its function is as follows. Catalyzes the condensation of the acetyl group of acetyl-CoA with 3-methyl-2-oxobutanoate (2-oxoisovalerate) to form 3-carboxy-3-hydroxy-4-methylpentanoate (2-isopropylmalate). Carries out the first step of the leucine biosynthesis pathway. This Sulfurisphaera tokodaii (strain DSM 16993 / JCM 10545 / NBRC 100140 / 7) (Sulfolobus tokodaii) protein is 2-isopropylmalate synthase (leuA).